Reading from the N-terminus, the 303-residue chain is Ribosomal protein L11 methyltransferase (303 aa).

Residues T146, G167, D189, and N236 each contribute to the S-adenosyl-L-methionine site.

It belongs to the methyltransferase superfamily. PrmA family.

It localises to the cytoplasm. The catalysed reaction is L-lysyl-[protein] + 3 S-adenosyl-L-methionine = N(6),N(6),N(6)-trimethyl-L-lysyl-[protein] + 3 S-adenosyl-L-homocysteine + 3 H(+). Methylates ribosomal protein L11. This is Ribosomal protein L11 methyltransferase from Acinetobacter baylyi (strain ATCC 33305 / BD413 / ADP1).